Consider the following 266-residue polypeptide: METLKSNKARLEYLINDMHRERNDNDVLVMPSSFEDLWELYRGLANVRPALPVSDEYLAVQDAMLSDLNRQHVTDLKDLKPIKGDNIFVWQGDITTLKIDAIVNAANSRFLGCMQANHDCIDNIIHTKAGVQVRLDCAEIIRQQGRNEGVGKAKITRGYNLPAKYIIHTVGPQIRRLPVSKMNQDLLAKCYLSCLKLADQHSLNHVAFCCISTGVFAFPQDEAAEIAVRTVESYLKETNSTLKVVFNVFTDKDLQLYKEAFNRDAE.

Residues 74-265 form the Macro domain; that stretch reads TDLKDLKPIK…LYKEAFNRDA (192 aa). The ADP-D-ribose site is built by aspartate 93, isoleucine 94, and asparagine 107. Cysteine 113, histidine 118, and cysteine 120 together coordinate Zn(2+). ADP-D-ribose contacts are provided by cysteine 120, isoleucine 121, aspartate 122, serine 212, threonine 213, glycine 214, and phenylalanine 216.

It belongs to the MacroD-type family. Zn-Macro subfamily. Requires Zn(2+) as cofactor.

The enzyme catalyses 4-O-(ADP-D-ribosyl)-L-aspartyl-[protein] + H2O = L-aspartyl-[protein] + ADP-D-ribose + H(+). Functionally, ADP-ribosylhydrolase that specifically reverses the SirTM-mediated mono-ADP-ribosylation at an asparatate residue of GcvH-L, by releasing ADP-ribose from the target protein. May play a role in the regulation of the response to host-induced oxidative stress. The polypeptide is Protein-ADP-ribose hydrolase (Staphylococcus aureus (strain MSSA476)).